A 493-amino-acid chain; its full sequence is 3-octaprenyl-4-hydroxybenzoate carboxy-lyase (493 aa).

Residue Asn-172 coordinates Mn(2+). Residues 175 to 177 (IYR), 189 to 191 (RWL), and 194 to 195 (RG) contribute to the prenylated FMN site. Glu-238 is a Mn(2+) binding site. Asp-287 serves as the catalytic Proton donor.

The protein belongs to the UbiD family. In terms of assembly, homohexamer. Requires prenylated FMN as cofactor. Mn(2+) is required as a cofactor.

The protein localises to the cell membrane. It catalyses the reaction a 4-hydroxy-3-(all-trans-polyprenyl)benzoate + H(+) = a 2-(all-trans-polyprenyl)phenol + CO2. Its pathway is cofactor biosynthesis; ubiquinone biosynthesis. Catalyzes the decarboxylation of 3-octaprenyl-4-hydroxy benzoate to 2-octaprenylphenol, an intermediate step in ubiquinone biosynthesis. This is 3-octaprenyl-4-hydroxybenzoate carboxy-lyase from Cellvibrio japonicus (strain Ueda107) (Pseudomonas fluorescens subsp. cellulosa).